The following is a 275-amino-acid chain: MSDTQAAEPLAEPAAEPTGLNRWALRIEYDGTGYLGWQKQNDGTSIQGLIEAAASKLVRNRPVPSITAGRTDAGVHAAGMVIHLDFPDDAPIDARQIRDGMGYHLKPHRVVVLETAKVGPEWNARFSATWRSYRYTILNRPARPGLMENRVWHIKRPLDVDLMQQAANHLLGPHDFTSFRAVACQARSPIRTLDVLNIHRDGELVMIDTKARSFLHHQVRNMAGTLMMIGSRQWPVEKIIEILEAKDRCAAGQTAPPEGLCLMDVGYPDDPFNRS.

Asp72 (nucleophile) is an active-site residue. Tyr133 lines the substrate pocket.

This sequence belongs to the tRNA pseudouridine synthase TruA family. As to quaternary structure, homodimer.

It carries out the reaction uridine(38/39/40) in tRNA = pseudouridine(38/39/40) in tRNA. Functionally, formation of pseudouridine at positions 38, 39 and 40 in the anticodon stem and loop of transfer RNAs. The protein is tRNA pseudouridine synthase A of Gluconobacter oxydans (strain 621H) (Gluconobacter suboxydans).